We begin with the raw amino-acid sequence, 537 residues long: Chaperonin GroEL (537 aa).

Residues 29-32 (TLGP), 86-90 (DGTTT), G413, 477-479 (NAA), and D493 each bind ATP.

It belongs to the chaperonin (HSP60) family. In terms of assembly, forms a cylinder of 14 subunits composed of two heptameric rings stacked back-to-back. Interacts with the co-chaperonin GroES.

It localises to the cytoplasm. It carries out the reaction ATP + H2O + a folded polypeptide = ADP + phosphate + an unfolded polypeptide.. Together with its co-chaperonin GroES, plays an essential role in assisting protein folding. The GroEL-GroES system forms a nano-cage that allows encapsulation of the non-native substrate proteins and provides a physical environment optimized to promote and accelerate protein folding. The sequence is that of Chaperonin GroEL from Bifidobacterium animalis subsp. lactis (strain AD011).